Reading from the N-terminus, the 105-residue chain is Small ribosomal subunit protein bS20 (105 aa).

It belongs to the bacterial ribosomal protein bS20 family.

Its function is as follows. Binds directly to 16S ribosomal RNA. The chain is Small ribosomal subunit protein bS20 from Caldanaerobacter subterraneus subsp. tengcongensis (strain DSM 15242 / JCM 11007 / NBRC 100824 / MB4) (Thermoanaerobacter tengcongensis).